The primary structure comprises 382 residues: Mannitol-1-phosphate 5-dehydrogenase (382 aa).

3–14 (ALHFGAGNIGRG) is an NAD(+) binding site. Residue Lys269 is modified to N6-acetyllysine.

The protein belongs to the mannitol dehydrogenase family.

It carries out the reaction D-mannitol 1-phosphate + NAD(+) = beta-D-fructose 6-phosphate + NADH + H(+). This Shigella sonnei (strain Ss046) protein is Mannitol-1-phosphate 5-dehydrogenase.